The sequence spans 379 residues: Cobalt-precorrin-5B C(1)-methyltransferase (379 aa).

Belongs to the CbiD family.

The enzyme catalyses Co-precorrin-5B + S-adenosyl-L-methionine = Co-precorrin-6A + S-adenosyl-L-homocysteine. The protein operates within cofactor biosynthesis; adenosylcobalamin biosynthesis; cob(II)yrinate a,c-diamide from sirohydrochlorin (anaerobic route): step 6/10. Its function is as follows. Catalyzes the methylation of C-1 in cobalt-precorrin-5B to form cobalt-precorrin-6A. The polypeptide is Cobalt-precorrin-5B C(1)-methyltransferase (Salmonella arizonae (strain ATCC BAA-731 / CDC346-86 / RSK2980)).